A 56-amino-acid polypeptide reads, in one-letter code: Large ribosomal subunit protein bL32 (56 aa).

The tract at residues 1–26 (MAVQKSKVTRSRRGQRRSHDALTAAA) is disordered. Residues 7-16 (KVTRSRRGQR) show a composition bias toward basic residues.

Belongs to the bacterial ribosomal protein bL32 family.

This is Large ribosomal subunit protein bL32 (rpmF) from Moritella marina (Vibrio marinus).